Here is a 184-residue protein sequence, read N- to C-terminus: Secreted protein B (184 aa).

The signal sequence occupies residues 1 to 19; it reads MRFILVLVLILGLVSSSFG. N-linked (GlcNAc...) asparagine glycosylation occurs at N129. The Cell attachment site motif lies at 164–166; that stretch reads RGD.

This sequence belongs to the Sct family.

The protein localises to the secreted. This Dictyostelium discoideum (Social amoeba) protein is Secreted protein B (29C).